The primary structure comprises 185 residues: Ribosome-recycling factor (185 aa).

Residues 142-161 (LVKDGEAGEDEGARAEKELD) form a disordered region.

The protein belongs to the RRF family.

It localises to the cytoplasm. Functionally, responsible for the release of ribosomes from messenger RNA at the termination of protein biosynthesis. May increase the efficiency of translation by recycling ribosomes from one round of translation to another. The chain is Ribosome-recycling factor from Paenarthrobacter aurescens (strain TC1).